The primary structure comprises 90 residues: Mitochondrial import inner membrane translocase subunit Tim10 (90 aa).

The Twin CX3C motif signature appears at 29 to 54 (CHRKCVPPHYKEAELSKGESVCLDRC). Intrachain disulfides connect C29–C54 and C33–C50.

This sequence belongs to the small Tim family. Heterohexamer; composed of 3 copies of TIMM9 and 3 copies of TIMM10/TIM10A, named soluble 70 kDa complex. The complex forms a 6-bladed alpha-propeller structure and associates with the TIMM22 component of the TIM22 complex. Interacts with multi-pass transmembrane proteins in transit. Also forms a complex composed of TIMM9, TIMM10/TIM10A and FXC1/TIM10B.

Its subcellular location is the mitochondrion inner membrane. Its function is as follows. Mitochondrial intermembrane chaperone that participates in the import and insertion of multi-pass transmembrane proteins into the mitochondrial inner membrane. May also be required for the transfer of beta-barrel precursors from the TOM complex to the sorting and assembly machinery (SAM complex) of the outer membrane. Acts as a chaperone-like protein that protects the hydrophobic precursors from aggregation and guide them through the mitochondrial intermembrane space. The chain is Mitochondrial import inner membrane translocase subunit Tim10 (TIMM10) from Bos taurus (Bovine).